The chain runs to 299 residues: Taste receptor type 2 member 4 (299 aa).

At 1-9 the chain is on the extracellular side; sequence MLRLFYFSA. A helical membrane pass occupies residues 10–30; that stretch reads VIASVILNFVGIIMNLFITVV. Residues 31–46 are Cytoplasmic-facing; the sequence is NCKTWVKSHRISSSDR. The chain crosses the membrane as a helical span at residues 47–67; it reads ILFSLGITRFLMLGLFLVNTI. Residues 68–81 lie on the Extracellular side of the membrane; that stretch reads YFVSSNMERSVYLS. The helical transmembrane segment at 82 to 102 threads the bilayer; sequence AFFVLCFMFLDSSSLWFVTLL. Over 103–131 the chain is Cytoplasmic; the sequence is NILYCVKITNFQHSVFLLLKRSISPKIPR. A helical transmembrane segment spans residues 132-152; it reads LLLAFVLISAFTTCLYITLSQ. Residues 153–172 are Extracellular-facing; sequence ASPFPELVTTRNNTSFNISE. 3 N-linked (GlcNAc...) asparagine glycosylation sites follow: asparagine 164, asparagine 165, and asparagine 169. The helical transmembrane segment at 173–193 threads the bilayer; the sequence is GILSLVVSLVLSSSLQFIINV. Residues 194-230 lie on the Cytoplasmic side of the membrane; it reads TSASLLIHSLRRHIQKMQKNATGFWNPQMEAHVGAMK. The chain crosses the membrane as a helical span at residues 231–251; it reads LMVYFLILYIPYSVATLVQYL. The Extracellular portion of the chain corresponds to 252 to 262; it reads PFYAGMDMGTK. Residues 263–283 traverse the membrane as a helical segment; it reads SICLIFATLYSPGHSVLIIIT. Residues 284–299 lie on the Cytoplasmic side of the membrane; that stretch reads HPKLKTTAKKILCFKK.

The protein belongs to the G-protein coupled receptor T2R family.

It is found in the membrane. The protein resides in the cell projection. It localises to the cilium membrane. Its function is as follows. Gustducin-coupled receptor implicated in the perception of bitter compounds in the oral cavity and the gastrointestinal tract. Signals through PLCB2 and the calcium-regulated cation channel TRPM5. In airway epithelial cells, binding of denatonium increases the intracellular calcium ion concentration and stimulates ciliary beat frequency. This is Taste receptor type 2 member 4 (TAS2R4) from Gorilla gorilla gorilla (Western lowland gorilla).